Reading from the N-terminus, the 214-residue chain is Calcineurin B homologous protein 3 (214 aa).

The tract at residues 1–20 (MGAAHSASEEVRELEGKTGF) is disordered. Glycine 2 carries N-myristoyl glycine lipidation. The span at 7–16 (ASEEVRELEG) shows a compositional bias: basic and acidic residues. One can recognise an EF-hand domain in the interval 110–145 (SRKEKLRFLFHMYDSDSDGRITLEEYRNVVEELLSG). Residues aspartate 123, aspartate 125, aspartate 127, arginine 129, and glutamate 134 each contribute to the Ca(2+) site.

Belongs to the calcineurin regulatory subunit family. CHP subfamily. In terms of assembly, monomer. Homodimer; disulfide-linked. Interacts with SLC9A1/NHE1; the interaction enables an optimal Na(+)/H(+) exchange activity. As to expression, expressed in mature megakaryocytes and polymorphonuclear granulocytes (at protein level). Abundantly expressed in heart. Also expressed at a lower level in adult testis and salivary gland, and in the placenta.

The protein localises to the nucleus. Its subcellular location is the cytoplasm. The protein resides in the membrane. It is found in the cell membrane. It localises to the cell projection. The protein localises to the lamellipodium. Its subcellular location is the ruffle membrane. Functions as an integral cofactor in cell pH regulation by controlling plasma membrane-type Na(+)/H(+) exchange activity. Promotes the maturation, transport, cell surface stability and exchange activity of SLC9A1/NHE1 at the plasma membrane. Promotes the induction of hematopoietic stem cell differentiation toward megakaryocytic lineage. Essential for the coupling of ERK cascade activation with the expression of ETS family genes in megakaryocytic differentiation. Also involved in granulocytic differentiation in a ERK-dependent manner. Inhibits the phosphatase activity of calcineurin. The polypeptide is Calcineurin B homologous protein 3 (TESC) (Homo sapiens (Human)).